The chain runs to 276 residues: Formamidopyrimidine-DNA glycosylase (276 aa).

The active-site Schiff-base intermediate with DNA is the P2. The active-site Proton donor is the E3. Catalysis depends on K58, which acts as the Proton donor; for beta-elimination activity. DNA is bound by residues H92, R111, and R153. The segment at 238-272 (TVYGRERQNCLNCSSTIIKTKHSGRSTFYCRTCQY) adopts an FPG-type zinc-finger fold. R262 serves as the catalytic Proton donor; for delta-elimination activity.

The protein belongs to the FPG family. Monomer. It depends on Zn(2+) as a cofactor.

The enzyme catalyses Hydrolysis of DNA containing ring-opened 7-methylguanine residues, releasing 2,6-diamino-4-hydroxy-5-(N-methyl)formamidopyrimidine.. The catalysed reaction is 2'-deoxyribonucleotide-(2'-deoxyribose 5'-phosphate)-2'-deoxyribonucleotide-DNA = a 3'-end 2'-deoxyribonucleotide-(2,3-dehydro-2,3-deoxyribose 5'-phosphate)-DNA + a 5'-end 5'-phospho-2'-deoxyribonucleoside-DNA + H(+). Involved in base excision repair of DNA damaged by oxidation or by mutagenic agents. Acts as a DNA glycosylase that recognizes and removes damaged bases. Has a preference for oxidized purines, such as 7,8-dihydro-8-oxoguanine (8-oxoG). Has AP (apurinic/apyrimidinic) lyase activity and introduces nicks in the DNA strand. Cleaves the DNA backbone by beta-delta elimination to generate a single-strand break at the site of the removed base with both 3'- and 5'-phosphates. This Rickettsia felis (strain ATCC VR-1525 / URRWXCal2) (Rickettsia azadi) protein is Formamidopyrimidine-DNA glycosylase.